Here is a 1366-residue protein sequence, read N- to C-terminus: DNA-directed RNA polymerase subunit beta' (1366 aa).

Residues 1–20 show a composition bias toward basic residues; it reads MTSSKPKKTSRVRKTTKNSK. The segment at 1-34 is disordered; it reads MTSSKPKKTSRVRKTTKNSKKNNPLTMPALAKTP. Residues C248, C315, C322, and C325 each contribute to the Zn(2+) site. The disordered stretch occupies residues 1291–1366; the sequence is YTVDMPQSPS…LQEEGLLSDE (76 aa). The span at 1295 to 1305 shows a compositional bias: polar residues; sequence MPQSPSVSSTA. Low complexity predominate over residues 1354–1366; sequence LEGLQEEGLLSDE.

This sequence belongs to the RNA polymerase beta' chain family. RpoC2 subfamily. As to quaternary structure, in cyanobacteria the RNAP catalytic core is composed of 2 alpha, 1 beta, 1 beta', 1 gamma and 1 omega subunit. When a sigma factor is associated with the core the holoenzyme is formed, which can initiate transcription. Zn(2+) is required as a cofactor.

The enzyme catalyses RNA(n) + a ribonucleoside 5'-triphosphate = RNA(n+1) + diphosphate. Its function is as follows. DNA-dependent RNA polymerase catalyzes the transcription of DNA into RNA using the four ribonucleoside triphosphates as substrates. The protein is DNA-directed RNA polymerase subunit beta' of Prochlorococcus marinus (strain MIT 9301).